Consider the following 445-residue polypeptide: N-succinylarginine dihydrolase (445 aa).

Residues 19-28 (AGLSYGNVAS), Asn-110, and 137-138 (HR) contribute to the substrate site. Glu-174 is an active-site residue. Position 214 (Arg-214) interacts with substrate. His-250 is a catalytic residue. 2 residues coordinate substrate: Asp-252 and Asn-363. Cys-369 functions as the Nucleophile in the catalytic mechanism.

Belongs to the succinylarginine dihydrolase family. As to quaternary structure, homodimer.

The enzyme catalyses N(2)-succinyl-L-arginine + 2 H2O + 2 H(+) = N(2)-succinyl-L-ornithine + 2 NH4(+) + CO2. The protein operates within amino-acid degradation; L-arginine degradation via AST pathway; L-glutamate and succinate from L-arginine: step 2/5. In terms of biological role, catalyzes the hydrolysis of N(2)-succinylarginine into N(2)-succinylornithine, ammonia and CO(2). The polypeptide is N-succinylarginine dihydrolase (Shewanella loihica (strain ATCC BAA-1088 / PV-4)).